A 269-amino-acid polypeptide reads, in one-letter code: Pertussis toxin subunit 1 homolog (269 aa).

Residues 1 to 34 form the signal peptide; it reads MRCTRAIRQTARTGWLTWLAILAVTAPVTSPAWA.

The protein belongs to the bacterial exotoxin subunit A family.

The polypeptide is Pertussis toxin subunit 1 homolog (ptxA) (Bordetella bronchiseptica (strain ATCC BAA-588 / NCTC 13252 / RB50) (Alcaligenes bronchisepticus)).